Here is a 191-residue protein sequence, read N- to C-terminus: PBAN-type neuropeptides (191 aa).

The first 17 residues, 1–17 (MFSPLLFFAVSISCVLA), serve as a signal peptide directing secretion. Leu44 bears the Leucine amide mark. The propeptide occupies 48–91 (SLRISTEDNRQAFFKLLEAADALKYYYDRLPYEMQADEPETRVT). Residues Leu100, Leu120, Leu156, and Leu166 each carry the leucine amide modification. Residues 169 to 191 (ELSYDMLPSKLRLVRSTNRTQST) constitute a propeptide that is removed on maturation.

It belongs to the pyrokinin family. In terms of tissue distribution, expressed in the subesophageal ganglion.

It localises to the secreted. Its function is as follows. A hormone that controls sex pheromone production in females and pheromone responsiveness in male. The chain is PBAN-type neuropeptides from Spodoptera littoralis (Egyptian cotton leafworm).